The following is a 1505-amino-acid chain: Phosphatidylinositol 3-kinase C2 domain-containing subunit gamma (1505 aa).

The segment at 1–32 is disordered; the sequence is MAYNWQTEPNRAEPQEGGHDHQQCHHADQHLS. Positions 10 to 31 are enriched in basic and acidic residues; sequence NRAEPQEGGHDHQQCHHADQHL. The region spanning 278–370 is the PI3K-RBD domain; sequence PSRLFADTQF…IQLHLQRSRD (93 aa). The region spanning 540–688 is the C2 PI3K-type domain; the sequence is LHSHLSFTVC…TPLTLQIDFP (149 aa). A PIK helical domain is found at 703 to 879; sequence RTDHQEPPRE…QELLAALQFC (177 aa). In terms of domain architecture, PI3K/PI4K catalytic spans 948–1226; it reads DRDACSYFTS…KIKQSLECFP (279 aa). The G-loop stretch occupies residues 954 to 960; the sequence is YFTSNAL. A catalytic loop region spans residues 1090 to 1098; that stretch reads GVCDRHNDN. The segment at 1109–1135 is activation loop; it reads HIDFGKFLGHAQTFGGIKRDRAPFIFT. The PX domain maps to 1259 to 1371; the sequence is LNKTRTIQRV…SFFLSEHIQQ (113 aa). A C2 domain is found at 1384–1505; the sequence is HSPDKSPQVQ…KWYPLGNSII (122 aa).

The protein belongs to the PI3/PI4-kinase family. As to expression, predominantly expressed in normal liver. High levels also found in regenerating liver. Very low levels found in heart and testis.

It is found in the membrane. The catalysed reaction is a 1,2-diacyl-sn-glycero-3-phospho-(1D-myo-inositol) + ATP = a 1,2-diacyl-sn-glycero-3-phospho-(1D-myo-inositol-3-phosphate) + ADP + H(+). It carries out the reaction a 1,2-diacyl-sn-glycero-3-phospho-(1D-myo-inositol 4-phosphate) + ATP = a 1,2-diacyl-sn-glycero-3-phospho-(1D-myo-inositol-3,4-bisphosphate) + ADP + H(+). In terms of biological role, generates phosphatidylinositol 3-phosphate (PtdIns3P) and phosphatidylinositol 3,4-bisphosphate (PtdIns(3,4)P2) that act as second messengers. May play a role in SDF1A-stimulated chemotaxis. This Rattus norvegicus (Rat) protein is Phosphatidylinositol 3-kinase C2 domain-containing subunit gamma (Pik3c2g).